The chain runs to 288 residues: Nucleotide-binding protein Neut_1559 (288 aa).

8–15 (GLSGSGKS) contributes to the ATP binding site. 57-60 (DMRS) contacts GTP.

Belongs to the RapZ-like family.

Its function is as follows. Displays ATPase and GTPase activities. The protein is Nucleotide-binding protein Neut_1559 of Nitrosomonas eutropha (strain DSM 101675 / C91 / Nm57).